Consider the following 764-residue polypeptide: 5-methyltetrahydropteroyltriglutamate--homocysteine methyltransferase (764 aa).

5-methyltetrahydropteroyltri-L-glutamate-binding positions include 16–19 and lysine 121; that span reads RELK. Residues 440–442 and glutamate 493 contribute to the L-homocysteine site; that span reads IGS. Residues 440–442 and glutamate 493 each bind L-methionine; that span reads IGS. 5-methyltetrahydropteroyltri-L-glutamate-binding positions include 524–525 and tryptophan 570; that span reads RC. Aspartate 608 serves as a coordination point for L-homocysteine. L-methionine is bound at residue aspartate 608. Position 614 (glutamate 614) interacts with 5-methyltetrahydropteroyltri-L-glutamate. Zn(2+) contacts are provided by histidine 650, cysteine 652, and glutamate 674. The active-site Proton donor is the histidine 703. Residue cysteine 735 coordinates Zn(2+).

Belongs to the vitamin-B12 independent methionine synthase family. Zn(2+) serves as cofactor.

The catalysed reaction is 5-methyltetrahydropteroyltri-L-glutamate + L-homocysteine = tetrahydropteroyltri-L-glutamate + L-methionine. Its pathway is amino-acid biosynthesis; L-methionine biosynthesis via de novo pathway; L-methionine from L-homocysteine (MetE route): step 1/1. Functionally, catalyzes the transfer of a methyl group from 5-methyltetrahydrofolate to homocysteine resulting in methionine formation. In Burkholderia cenocepacia (strain HI2424), this protein is 5-methyltetrahydropteroyltriglutamate--homocysteine methyltransferase.